A 137-amino-acid chain; its full sequence is Seminal plasma sperm motility inhibitor (137 aa).

Residues 1 to 21 form the signal peptide; that stretch reads MKLGSAIPWALLLSTXTLVST. A disulfide bond links Cys-30 and Cys-51. Residues 30 to 131 enclose the CUB domain; sequence CGGFLKNYSG…SSFNVYFYGI (102 aa). The N-linked (GlcNAc...) asparagine glycan is linked to Asn-36.

It belongs to the spermadhesin family. Seminal plasma or sperm.

Its subcellular location is the secreted. Its function is as follows. Inhibitor of sperm motility. The protein is Seminal plasma sperm motility inhibitor (SPMI) of Sus scrofa (Pig).